Consider the following 59-residue polypeptide: Large ribosomal subunit protein uL30 (59 aa).

This sequence belongs to the universal ribosomal protein uL30 family. As to quaternary structure, part of the 50S ribosomal subunit.

The sequence is that of Large ribosomal subunit protein uL30 from Staphylococcus haemolyticus (strain JCSC1435).